Here is a 138-residue protein sequence, read N- to C-terminus: Large ribosomal subunit protein bL17 (138 aa).

Belongs to the bacterial ribosomal protein bL17 family. As to quaternary structure, part of the 50S ribosomal subunit. Contacts protein L32.

This is Large ribosomal subunit protein bL17 from Nitrobacter winogradskyi (strain ATCC 25391 / DSM 10237 / CIP 104748 / NCIMB 11846 / Nb-255).